The chain runs to 404 residues: Mitochondrial intermembrane space import and assembly protein 40 (404 aa).

The N-terminal 34 residues, 1–34 (MVSAVSRQLVNRQLNRVLLRNARIAPFARATRFY), are a transit peptide targeting the mitochondrion. Topologically, residues 35-50 (SSKYAQESENAKRHKM) are mitochondrial matrix. Residues 51 to 71 (GLLIAGVAVAGAIVFVTPPQW) form a helical; Signal-anchor for type II membrane protein membrane-spanning segment. The Mitochondrial intermembrane segment spans residues 72–404 (KKYFRAAKKV…PDEDTASKKD (333 aa)). The tract at residues 84-287 (VAESKEDPVS…SAYNPDTGEI (204 aa)) is disordered. The span at 101 to 113 (ESVQESTEEPQQS) shows a compositional bias: low complexity. Positions 124–135 (EQAQDESASSGD) are enriched in polar residues. Composition is skewed to basic and acidic residues over residues 136 to 156 (SEAKKAHDEFADQNEASEKES), 226 to 237 (EEDKTPKAEELK), and 246 to 276 (EEPKKEDDSSKTIHSLNSEKDMEAVEEEVKQ). 3 cysteine pairs are disulfide-bonded: cysteine 291/cysteine 293, cysteine 302/cysteine 335, and cysteine 312/cysteine 325. A CHCH domain is found at 299–343 (HGPCGEEFKAAFSCFVYSEAEPKGIDCVEKFQHMQDCFRRYPEHY). 2 short sequence motifs (cx9C motif) span residues 302 to 312 (CGEEFKAAFSC) and 325 to 335 (CVEKFQHMQDC). The segment at 346 to 404 (QLADPADDENVDHEKNLSEGKDTGVDSTPPKDEAYLKTEKEKKIEENASPDEDTASKKD) is disordered. The span at 357-391 (DHEKNLSEGKDTGVDSTPPKDEAYLKTEKEKKIEE) shows a compositional bias: basic and acidic residues.

As to quaternary structure, monomer. It depends on Cu(2+) as a cofactor. The cofactor is Zn(2+).

Its subcellular location is the mitochondrion inner membrane. Its function is as follows. Required for the import and folding of small cysteine-containing proteins (small Tim) in the mitochondrial intermembrane space (IMS). Forms a redox cycle with ERV1 that involves a disulfide relay system. Precursor proteins to be imported into the IMS are translocated in their reduced form into the mitochondria. The oxidized form of MIA40 forms a transient intermolecular disulfide bridge with the reduced precursor protein, resulting in oxidation of the precursor protein that now contains an intramolecular disulfide bond and is able to undergo folding in the IMS. The sequence is that of Mitochondrial intermembrane space import and assembly protein 40 (MIA40) from Candida glabrata (strain ATCC 2001 / BCRC 20586 / JCM 3761 / NBRC 0622 / NRRL Y-65 / CBS 138) (Yeast).